Reading from the N-terminus, the 287-residue chain is Glutamate racemase (287 aa).

Residues 32 to 33 (DS) and 64 to 65 (YG) contribute to the substrate site. The active-site Proton donor/acceptor is the cysteine 96. 97 to 98 (NT) is a substrate binding site. The active-site Proton donor/acceptor is cysteine 208. Residue 209–210 (TH) participates in substrate binding.

This sequence belongs to the aspartate/glutamate racemases family.

It catalyses the reaction L-glutamate = D-glutamate. It participates in cell wall biogenesis; peptidoglycan biosynthesis. Its function is as follows. Provides the (R)-glutamate required for cell wall biosynthesis. The polypeptide is Glutamate racemase (Photorhabdus laumondii subsp. laumondii (strain DSM 15139 / CIP 105565 / TT01) (Photorhabdus luminescens subsp. laumondii)).